A 90-amino-acid polypeptide reads, in one-letter code: UPF0213 protein Reut_B5558 (90 aa).

The GIY-YIG domain maps to 5-80 (RQWYLYLLEC…KRMSSAQKIA (76 aa)).

Belongs to the UPF0213 family.

The polypeptide is UPF0213 protein Reut_B5558 (Cupriavidus pinatubonensis (strain JMP 134 / LMG 1197) (Cupriavidus necator (strain JMP 134))).